The following is a 348-amino-acid chain: Nicotinate-nucleotide--dimethylbenzimidazole phosphoribosyltransferase (348 aa).

Glutamate 316 (proton acceptor) is an active-site residue.

The protein belongs to the CobT family.

It catalyses the reaction 5,6-dimethylbenzimidazole + nicotinate beta-D-ribonucleotide = alpha-ribazole 5'-phosphate + nicotinate + H(+). It functions in the pathway nucleoside biosynthesis; alpha-ribazole biosynthesis; alpha-ribazole from 5,6-dimethylbenzimidazole: step 1/2. Its function is as follows. Catalyzes the synthesis of alpha-ribazole-5'-phosphate from nicotinate mononucleotide (NAMN) and 5,6-dimethylbenzimidazole (DMB). The polypeptide is Nicotinate-nucleotide--dimethylbenzimidazole phosphoribosyltransferase (Xanthomonas axonopodis pv. citri (strain 306)).